The sequence spans 393 residues: Cysteine desulfurase (393 aa).

Residues 76-77 (GT), N155, Q183, and 203-205 (SAH) contribute to the pyridoxal 5'-phosphate site. K206 carries the N6-(pyridoxal phosphate)lysine modification. T241 provides a ligand contact to pyridoxal 5'-phosphate. C328 acts as the Cysteine persulfide intermediate in catalysis. C328 serves as a coordination point for [2Fe-2S] cluster.

This sequence belongs to the class-V pyridoxal-phosphate-dependent aminotransferase family. NifS/IscS subfamily. As to quaternary structure, homodimer. It depends on pyridoxal 5'-phosphate as a cofactor.

The enzyme catalyses (sulfur carrier)-H + L-cysteine = (sulfur carrier)-SH + L-alanine. Functionally, catalyzes the removal of elemental sulfur atoms from cysteine to produce alanine. Seems to participate in the biosynthesis of the nitrogenase metalloclusters by providing the inorganic sulfur required for the Fe-S core formation. The chain is Cysteine desulfurase from Bradyrhizobium diazoefficiens (strain JCM 10833 / BCRC 13528 / IAM 13628 / NBRC 14792 / USDA 110).